Here is a 275-residue protein sequence, read N- to C-terminus: Orotidine 5'-phosphate decarboxylase (275 aa).

Lys95 acts as the Proton donor in catalysis.

It belongs to the OMP decarboxylase family. Type 2 subfamily.

The enzyme catalyses orotidine 5'-phosphate + H(+) = UMP + CO2. Its pathway is pyrimidine metabolism; UMP biosynthesis via de novo pathway; UMP from orotate: step 2/2. This chain is Orotidine 5'-phosphate decarboxylase, found in Delftia acidovorans (strain DSM 14801 / SPH-1).